A 201-amino-acid chain; its full sequence is Dephospho-CoA kinase (201 aa).

One can recognise a DPCK domain in the interval 3–201 (IIGLTGGMAA…ALLHRLREAS (199 aa)). Residue 11-16 (AAGKST) participates in ATP binding.

The protein belongs to the CoaE family.

It localises to the cytoplasm. It catalyses the reaction 3'-dephospho-CoA + ATP = ADP + CoA + H(+). The protein operates within cofactor biosynthesis; coenzyme A biosynthesis; CoA from (R)-pantothenate: step 5/5. Functionally, catalyzes the phosphorylation of the 3'-hydroxyl group of dephosphocoenzyme A to form coenzyme A. This chain is Dephospho-CoA kinase, found in Gluconobacter oxydans (strain 621H) (Gluconobacter suboxydans).